The primary structure comprises 1045 residues: Extracellular serine protease (1045 aa).

The first 27 residues, 1–27 (MILNKRLKLAYCVFLGCYGLSIHSSLA), serve as a signal peptide directing secretion. Positions 49–397 (QWGLEAISAE…WGRVNLRDAI (349 aa)) constitute a Peptidase S8 domain. Residues Asp-76, His-112, and Ser-341 each act as charge relay system in the active site. A propeptide spans 646–1045 (SLASTENEKA…SVNAGLTWRF (400 aa)) (translocator domain; removed in mature form). Positions 769–1045 (IKADDNGAWA…SVNAGLTWRF (277 aa)) constitute an Autotransporter domain.

Belongs to the peptidase S8 family.

The protein localises to the secreted. This chain is Extracellular serine protease, found in Serratia marcescens.